A 300-amino-acid polypeptide reads, in one-letter code: Iodotyrosine deiodinase (300 aa).

Residues 15 to 31 (VGLISVSIAAGVALGQL) traverse the membrane as a helical segment. FMN-binding positions include 110 to 114 (RRSVR), serine 138, and 138 to 139 (SG). 3,5-diiodo-L-tyrosine is bound by residues alanine 140, glutamate 167, tyrosine 171, and lysine 192. The 3-iodo-L-tyrosine site is built by alanine 140, glutamate 167, tyrosine 171, and lysine 192. FMN is bound by residues 247–249 (TTT) and arginine 289.

This sequence belongs to the nitroreductase family. FMN is required as a cofactor. May be cleaved at Gln-55. The cleaved form retains catalytic activity.

It is found in the membrane. It catalyses the reaction 2 iodide + L-tyrosine + 2 NADP(+) = 3,5-diiodo-L-tyrosine + 2 NADPH + H(+). The enzyme catalyses iodide + L-tyrosine + NADP(+) = 3-iodo-L-tyrosine + NADPH. The catalysed reaction is 3-iodo-L-tyrosine + iodide + NADP(+) = 3,5-diiodo-L-tyrosine + NADPH + H(+). It carries out the reaction L-tyrosine + chloride + NADP(+) = 3-chloro-L-tyrosine + NADPH. It catalyses the reaction bromide + L-tyrosine + NADP(+) = 3-bromo-L-tyrosine + NADPH. Its function is as follows. Catalyzes the dehalogenation of halotyrosines such as 3,5-diiodo-L-tyrosine. Likely to also catalyze the dehalogenation of other halotyrosines such as 3-bromo-L-tyrosine, 3-chloro-L-tyrosine and 3-iodo-L-tyrosine. This Daphnia pulex (Water flea) protein is Iodotyrosine deiodinase.